The sequence spans 568 residues: 2-succinyl-5-enolpyruvyl-6-hydroxy-3-cyclohexene-1-carboxylate synthase (568 aa).

The protein belongs to the TPP enzyme family. MenD subfamily. In terms of assembly, homodimer. Requires Mg(2+) as cofactor. The cofactor is Mn(2+). Thiamine diphosphate is required as a cofactor.

It carries out the reaction isochorismate + 2-oxoglutarate + H(+) = 5-enolpyruvoyl-6-hydroxy-2-succinyl-cyclohex-3-ene-1-carboxylate + CO2. It participates in quinol/quinone metabolism; 1,4-dihydroxy-2-naphthoate biosynthesis; 1,4-dihydroxy-2-naphthoate from chorismate: step 2/7. It functions in the pathway quinol/quinone metabolism; menaquinone biosynthesis. In terms of biological role, catalyzes the thiamine diphosphate-dependent decarboxylation of 2-oxoglutarate and the subsequent addition of the resulting succinic semialdehyde-thiamine pyrophosphate anion to isochorismate to yield 2-succinyl-5-enolpyruvyl-6-hydroxy-3-cyclohexene-1-carboxylate (SEPHCHC). The polypeptide is 2-succinyl-5-enolpyruvyl-6-hydroxy-3-cyclohexene-1-carboxylate synthase (Actinobacillus pleuropneumoniae serotype 5b (strain L20)).